The sequence spans 484 residues: Probable cytochrome P450 316a1 (484 aa).

A heme-binding site is contributed by Cys433.

This sequence belongs to the cytochrome P450 family. Heme serves as cofactor.

It is found in the endoplasmic reticulum membrane. Its subcellular location is the microsome membrane. Functionally, may be involved in the metabolism of insect hormones and in the breakdown of synthetic insecticides. In Drosophila melanogaster (Fruit fly), this protein is Probable cytochrome P450 316a1 (Cyp316a1).